Reading from the N-terminus, the 554-residue chain is Cytochrome c oxidase subunit 1-alpha (554 aa).

The chain crosses the membrane as a helical span at residues 26–56; the sequence is KDIGVLYLFTAGLAGLISVTLTVYMRMELQH. Cys-63 and Cys-77 form a disulfide bridge. 6 helical membrane passes run 81 to 118, 127 to 148, 175 to 203, 215 to 248, 260 to 295, and 301 to 319; these read AHLW…LHIG, LNNL…SLLS, AMDL…TFLN, PLFA…DRNF, DPVL…STFA, and GYLP…GFIV. Position 91 (His-91) interacts with Fe(II)-heme a. Residues His-273 and Tyr-277 each coordinate Cu cation. Residues 273–277 constitute a cross-link (1'-histidyl-3'-tyrosine (His-Tyr)); sequence HPEVY. Cu cation-binding residues include His-322 and His-323. 5 consecutive transmembrane segments (helical) span residues 331–359, 367–390, 399–425, 436–463, and 478–508; these read LTQQ…IATM, KTPM…VIAQ, DTYY…GTYY, PEWA…FLGR, and SYWN…TLFA. A heme a3-binding site is contributed by His-406. A Fe(II)-heme a-binding site is contributed by His-408.

It belongs to the heme-copper respiratory oxidase family. Cu(2+) is required as a cofactor. The cofactor is heme.

Its subcellular location is the cell inner membrane. The enzyme catalyses 4 Fe(II)-[cytochrome c] + O2 + 8 H(+)(in) = 4 Fe(III)-[cytochrome c] + 2 H2O + 4 H(+)(out). It functions in the pathway energy metabolism; oxidative phosphorylation. Functionally, subunit I and II form the functional core of the enzyme complex. Electrons originating in cytochrome c are transferred via heme a and Cu(A) to the binuclear center formed by heme a3 and Cu(B). This cytochrome c oxidase shows proton pump activity across the membrane in addition to the electron transfer. This Paracoccus denitrificans protein is Cytochrome c oxidase subunit 1-alpha (ctaDI).